Consider the following 309-residue polypeptide: Protein FdhE (309 aa).

This sequence belongs to the FdhE family.

Its subcellular location is the cytoplasm. Necessary for formate dehydrogenase activity. This chain is Protein FdhE, found in Salmonella enteritidis PT4 (strain P125109).